The sequence spans 948 residues: UvrABC system protein A (948 aa).

Residue 42–49 (GLSGSGKS) participates in ATP binding. The segment at 262-289 (CPVCSYSLPELEPRLFSFNNPMGSCPTC) adopts a C4-type zinc-finger fold. ABC transporter domains lie at 319-596 (WDKR…ENSV) and 616-945 (VNPG…KYLK). 649-656 (GVSGSGKS) provides a ligand contact to ATP. A C4-type zinc finger spans residues 748–774 (CEACQGDGVIKVEMHFLPDVYVPCEVC).

Belongs to the ABC transporter superfamily. UvrA family. As to quaternary structure, forms a heterotetramer with UvrB during the search for lesions.

It is found in the cytoplasm. Its function is as follows. The UvrABC repair system catalyzes the recognition and processing of DNA lesions. UvrA is an ATPase and a DNA-binding protein. A damage recognition complex composed of 2 UvrA and 2 UvrB subunits scans DNA for abnormalities. When the presence of a lesion has been verified by UvrB, the UvrA molecules dissociate. This chain is UvrABC system protein A, found in Neisseria meningitidis serogroup A / serotype 4A (strain DSM 15465 / Z2491).